A 245-amino-acid chain; its full sequence is MTLTASSSSRAVTNSPVVVALDYHNRDAAMAFVDKIDPRDCRLKVGKEMFTLFGPQFVRELQQRGFDIFLDLKFHDIPNTAAHAVAAAADLGVWMVNVHASGGARMMTAAREALVPFGKDAPLLIAVTVLTSMEASDLADLGVTLSPADYAERLAALTQKCGLDGVVCSAQEAVRFKQVFGQEFKLVTPGIRPQGSDAGDQRRIMTPEQALAAGVDYMVIGRPVTQSVDPAQTLKAINASLQRSA.

Substrate-binding positions include Asp-22, Lys-44, 71–80 (DLKFHDIPNT), Thr-131, Arg-192, Gln-201, Gly-221, and Arg-222. The active-site Proton donor is the Lys-73.

It belongs to the OMP decarboxylase family. Type 1 subfamily. As to quaternary structure, homodimer.

The enzyme catalyses orotidine 5'-phosphate + H(+) = UMP + CO2. It participates in pyrimidine metabolism; UMP biosynthesis via de novo pathway; UMP from orotate: step 2/2. Catalyzes the decarboxylation of orotidine 5'-monophosphate (OMP) to uridine 5'-monophosphate (UMP). This Escherichia coli O45:K1 (strain S88 / ExPEC) protein is Orotidine 5'-phosphate decarboxylase.